Reading from the N-terminus, the 383-residue chain is NADH-quinone oxidoreductase subunit D 1 (383 aa).

The protein belongs to the complex I 49 kDa subunit family. NDH-1 is composed of 14 different subunits. Subunits NuoB, C, D, E, F, and G constitute the peripheral sector of the complex.

The protein localises to the cell membrane. The enzyme catalyses a quinone + NADH + 5 H(+)(in) = a quinol + NAD(+) + 4 H(+)(out). Its function is as follows. NDH-1 shuttles electrons from NADH, via FMN and iron-sulfur (Fe-S) centers, to quinones in the respiratory chain. The immediate electron acceptor for the enzyme in this species is believed to be a menaquinone. Couples the redox reaction to proton translocation (for every two electrons transferred, four hydrogen ions are translocated across the cytoplasmic membrane), and thus conserves the redox energy in a proton gradient. This is NADH-quinone oxidoreductase subunit D 1 from Streptomyces coelicolor (strain ATCC BAA-471 / A3(2) / M145).